A 295-amino-acid chain; its full sequence is 15-cis-phytoene synthase (295 aa).

Belongs to the phytoene/squalene synthase family. Requires ATP as cofactor. Mn(2+) is required as a cofactor.

It carries out the reaction 2 (2E,6E,10E)-geranylgeranyl diphosphate = 15-cis-phytoene + 2 diphosphate. It functions in the pathway carotenoid biosynthesis; phytoene biosynthesis. With respect to regulation, significant inhibition is seen at GGPP concentrations above 100 uM. Functionally, involved in the biosynthesis of carotenoids. Catalyzes stereoselectively the condensation of two molecules of geranylgeranyl diphosphate (GGPP) to give prephytoene diphosphate (PPPP) and the subsequent rearrangement of the cyclopropylcarbinyl intermediate to yield 15-cis-phytoene. The chain is 15-cis-phytoene synthase (crtB) from Enterobacter agglomerans (Erwinia herbicola).